We begin with the raw amino-acid sequence, 110 residues long: Cytochrome c oxidase subunit 4B (110 aa).

3 helical membrane passes run 27-47 (YQVL…LTVA), 50-70 (GVGS…QVIF), and 88-108 (LFLY…VTII).

It belongs to the cytochrome c oxidase bacterial subunit 4 family.

Its subcellular location is the cell membrane. It carries out the reaction 4 Fe(II)-[cytochrome c] + O2 + 8 H(+)(in) = 4 Fe(III)-[cytochrome c] + 2 H2O + 4 H(+)(out). The protein is Cytochrome c oxidase subunit 4B (ctaF) of Bacillus subtilis (strain 168).